Here is a 631-residue protein sequence, read N- to C-terminus: PTS system glucosamine-specific EIICBA component (631 aa).

Residues 3 to 382 form the PTS EIIC type-1 domain; that stretch reads KKAFQILQQL…WNLKTPGRET (380 aa). The next 8 membrane-spanning stretches (helical) occupy residues 12 to 32, 56 to 76, 106 to 126, 149 to 169, 196 to 216, 243 to 263, 298 to 318, and 350 to 370; these read LGRA…LLRF, LIFA…AGLA, HLID…AYLY, IITS…WPLI, LLIP…MMGE, FMMG…LAII, FLFV…VIFV, and VVIP…RFAI. A PTS EIIB type-1 domain is found at 397–478; that stretch reads DQLAFHVLQA…KTIMAGGVPA (82 aa). Residue cysteine 419 is the Phosphocysteine intermediate; for EIIB activity of the active site. Cysteine 419 bears the Phosphocysteine mark. The PTS EIIA type-1 domain occupies 515–619; sequence DQVFSEKMMG…SAITPVIFTN (105 aa). The Tele-phosphohistidine intermediate; for EIIA activity role is filled by histidine 567. At histidine 567 the chain carries Phosphohistidine.

It is found in the cell membrane. The catalysed reaction is D-glucosamine(out) + N(pros)-phospho-L-histidyl-[protein] = D-glucosamine 6-phosphate(in) + L-histidyl-[protein]. Functionally, the phosphoenolpyruvate-dependent sugar phosphotransferase system (sugar PTS), a major carbohydrate active transport system, catalyzes the phosphorylation of incoming sugar substrates concomitantly with their translocation across the cell membrane. This system is involved in glucosamine transport. In vitro, when expressed in the absence of GamR and NagP, can transport N-acetylglucosamine. In addition, plays an important role in the phosphorylation of EIIA-deficient PTS transporters. The EIIA domain can transfer a phosphoryl group to EIIA-deficient PTS transporters, enabling growth with maltose, N-acetylglucosamine, sucrose or trehalose as the sole carbon source. The sequence is that of PTS system glucosamine-specific EIICBA component from Bacillus subtilis (strain 168).